A 240-amino-acid polypeptide reads, in one-letter code: UDP-2,3-diacylglucosamine hydrolase (240 aa).

Positions 8, 10, 41, 79, and 114 each coordinate Mn(2+). 79-80 is a substrate binding site; that stretch reads NR. Positions 122, 160, 164, 167, and 195 each coordinate substrate. Positions 195 and 197 each coordinate Mn(2+).

It belongs to the LpxH family. Mn(2+) serves as cofactor.

It localises to the cell inner membrane. It catalyses the reaction UDP-2-N,3-O-bis[(3R)-3-hydroxytetradecanoyl]-alpha-D-glucosamine + H2O = 2-N,3-O-bis[(3R)-3-hydroxytetradecanoyl]-alpha-D-glucosaminyl 1-phosphate + UMP + 2 H(+). Its pathway is glycolipid biosynthesis; lipid IV(A) biosynthesis; lipid IV(A) from (3R)-3-hydroxytetradecanoyl-[acyl-carrier-protein] and UDP-N-acetyl-alpha-D-glucosamine: step 4/6. Functionally, hydrolyzes the pyrophosphate bond of UDP-2,3-diacylglucosamine to yield 2,3-diacylglucosamine 1-phosphate (lipid X) and UMP by catalyzing the attack of water at the alpha-P atom. Involved in the biosynthesis of lipid A, a phosphorylated glycolipid that anchors the lipopolysaccharide to the outer membrane of the cell. In Shigella boydii serotype 18 (strain CDC 3083-94 / BS512), this protein is UDP-2,3-diacylglucosamine hydrolase.